Here is a 96-residue protein sequence, read N- to C-terminus: Protein RnfH (96 aa).

It belongs to the UPF0125 (RnfH) family.

The sequence is that of Protein RnfH from Escherichia coli O139:H28 (strain E24377A / ETEC).